The chain runs to 213 residues: MLPLAIPPNNIVRAMSSPNATGPLMRTSKAIITSNYTLLTDKTPYLLPVCFNESCRAEQVRMLYRRFFRLRPLVAQRAMIKESYTNYIRVKFSEDYALKRRQALPQNTCPVLDAIEAGRRSLTFILKAVSEIEDADSNPELAYDNYICRKILKNVLTLEYQRERLEFKNPKRKQILRQNYEYLDAKYHDPKYTSLRNADVSIIHFNETLGTRL.

It belongs to the IRC19 family.

Its function is as follows. Involved in sporulation and maintenance of the mitochondrial DNA. Is probably involved in a pathway contributing to genomic integrity. The chain is Increased recombination centers protein 19 (IRC19) from Eremothecium gossypii (strain ATCC 10895 / CBS 109.51 / FGSC 9923 / NRRL Y-1056) (Yeast).